A 433-amino-acid chain; its full sequence is tRNA-2-methylthio-N(6)-dimethylallyladenosine synthase (433 aa).

One can recognise an MTTase N-terminal domain in the interval 3 to 118 (KRLYIETLGC…IRDVIKQEKA (116 aa)). 6 residues coordinate [4Fe-4S] cluster: C12, C49, C81, C150, C154, and C157. In terms of domain architecture, Radical SAM core spans 136 to 371 (RTSPYKAFIN…LHLQMLDSIS (236 aa)). The TRAM domain occupies 372–433 (EQEKDKVYEV…RLSLEGELVG (62 aa)).

This sequence belongs to the methylthiotransferase family. MiaB subfamily. As to quaternary structure, monomer. It depends on [4Fe-4S] cluster as a cofactor.

The protein localises to the cytoplasm. It carries out the reaction N(6)-dimethylallyladenosine(37) in tRNA + (sulfur carrier)-SH + AH2 + 2 S-adenosyl-L-methionine = 2-methylsulfanyl-N(6)-dimethylallyladenosine(37) in tRNA + (sulfur carrier)-H + 5'-deoxyadenosine + L-methionine + A + S-adenosyl-L-homocysteine + 2 H(+). Functionally, catalyzes the methylthiolation of N6-(dimethylallyl)adenosine (i(6)A), leading to the formation of 2-methylthio-N6-(dimethylallyl)adenosine (ms(2)i(6)A) at position 37 in tRNAs that read codons beginning with uridine. The polypeptide is tRNA-2-methylthio-N(6)-dimethylallyladenosine synthase (Nitratiruptor sp. (strain SB155-2)).